The sequence spans 718 residues: Catalase-peroxidase (718 aa).

Residues 98–219 constitute a cross-link (tryptophyl-tyrosyl-methioninium (Trp-Tyr) (with M-245)); the sequence is WHAAGTYRMG…LAATEMGLIY (122 aa). The active-site Proton acceptor is His99. A cross-link (tryptophyl-tyrosyl-methioninium (Tyr-Met) (with W-98)) is located at residues 219 to 245; that stretch reads YVNPEGPQASGDPRSAAPFIRATFGNM. Position 260 (His260) interacts with heme b.

This sequence belongs to the peroxidase family. Peroxidase/catalase subfamily. In terms of assembly, homodimer or homotetramer. It depends on heme b as a cofactor. Post-translationally, formation of the three residue Trp-Tyr-Met cross-link is important for the catalase, but not the peroxidase activity of the enzyme.

It catalyses the reaction H2O2 + AH2 = A + 2 H2O. It carries out the reaction 2 H2O2 = O2 + 2 H2O. Bifunctional enzyme with both catalase and broad-spectrum peroxidase activity. This is Catalase-peroxidase from Acinetobacter baumannii (strain AB307-0294).